We begin with the raw amino-acid sequence, 79 residues long: Dermaseptin-S8 (79 aa).

An N-terminal signal peptide occupies residues M1–C22. The propeptide occupies E23–R45. Glutamine amide is present on Q76. Residues A78–Q79 constitute a propeptide that is removed on maturation.

Belongs to the frog skin active peptide (FSAP) family. Dermaseptin subfamily. Expressed by the skin glands.

It localises to the secreted. Functionally, potent antimicrobial peptide with activity against bacteria, fungi and protozoa. Probably acts by disturbing membrane functions with its amphipathic structure. The protein is Dermaseptin-S8 of Phyllomedusa sauvagei (Sauvage's leaf frog).